A 391-amino-acid chain; its full sequence is Formate-dependent phosphoribosylglycinamide formyltransferase (391 aa).

N(1)-(5-phospho-beta-D-ribosyl)glycinamide is bound by residues 20–21 and Glu80; that span reads EL. ATP-binding positions include Arg112, Lys153, 158 to 163, 193 to 196, and Glu201; these read SSGKGQ and EGFV. Positions 117-306 constitute an ATP-grasp domain; sequence RLAAETLGLP…EFALHVRAIL (190 aa). Positions 265 and 277 each coordinate Mg(2+). Residues Asp284, Lys354, and 361 to 362 each bind N(1)-(5-phospho-beta-D-ribosyl)glycinamide; that span reads RR.

The protein belongs to the PurK/PurT family. Homodimer.

It carries out the reaction N(1)-(5-phospho-beta-D-ribosyl)glycinamide + formate + ATP = N(2)-formyl-N(1)-(5-phospho-beta-D-ribosyl)glycinamide + ADP + phosphate + H(+). It participates in purine metabolism; IMP biosynthesis via de novo pathway; N(2)-formyl-N(1)-(5-phospho-D-ribosyl)glycinamide from N(1)-(5-phospho-D-ribosyl)glycinamide (formate route): step 1/1. Functionally, involved in the de novo purine biosynthesis. Catalyzes the transfer of formate to 5-phospho-ribosyl-glycinamide (GAR), producing 5-phospho-ribosyl-N-formylglycinamide (FGAR). Formate is provided by PurU via hydrolysis of 10-formyl-tetrahydrofolate. The protein is Formate-dependent phosphoribosylglycinamide formyltransferase of Shewanella sp. (strain W3-18-1).